Here is a 445-residue protein sequence, read N- to C-terminus: Tubulin beta-1 chain (445 aa).

Gln11, Glu69, Ser138, Gly142, Thr143, Gly144, Asn204, and Asn226 together coordinate GTP. Glu69 contacts Mg(2+). The tract at residues 426–445 (QDATAEDEEEYEDEEEEMAA) is disordered. The segment covering 429 to 445 (TAEDEEEYEDEEEEMAA) has biased composition (acidic residues).

Belongs to the tubulin family. In terms of assembly, dimer of alpha and beta chains. A typical microtubule is a hollow water-filled tube with an outer diameter of 25 nm and an inner diameter of 15 nM. Alpha-beta heterodimers associate head-to-tail to form protofilaments running lengthwise along the microtubule wall with the beta-tubulin subunit facing the microtubule plus end conferring a structural polarity. Microtubules usually have 13 protofilaments but different protofilament numbers can be found in some organisms and specialized cells. Mg(2+) is required as a cofactor.

It is found in the cytoplasm. The protein resides in the cytoskeleton. In terms of biological role, tubulin is the major constituent of microtubules, a cylinder consisting of laterally associated linear protofilaments composed of alpha- and beta-tubulin heterodimers. Microtubules grow by the addition of GTP-tubulin dimers to the microtubule end, where a stabilizing cap forms. Below the cap, tubulin dimers are in GDP-bound state, owing to GTPase activity of alpha-tubulin. The chain is Tubulin beta-1 chain (TUBB1) from Eleusine indica (Goosegrass).